We begin with the raw amino-acid sequence, 564 residues long: CTP synthase (564 aa).

Residues 1 to 265 form an amidoligase domain region; the sequence is MTKFVFVTGG…DEIVCHRLDI (265 aa). Ser-13 is a binding site for CTP. Residue Ser-13 participates in UTP binding. ATP contacts are provided by residues 14 to 19 and Asp-71; that span reads SLGKGI. Residues Asp-71 and Glu-139 each coordinate Mg(2+). Residues 146–148, 186–191, and Lys-222 contribute to the CTP site; these read DIE and KTKPTQ. UTP is bound by residues 186–191 and Lys-222; that span reads KTKPTQ. Positions 290–543 constitute a Glutamine amidotransferase type-1 domain; it reads SIALVGKYVD…IQAAISFAGQ (254 aa). Gly-351 is an L-glutamine binding site. Cys-378 serves as the catalytic Nucleophile; for glutamine hydrolysis. L-glutamine contacts are provided by residues 379 to 382, Glu-402, and Arg-469; that span reads LGMQ. Active-site residues include His-516 and Glu-518.

It belongs to the CTP synthase family. Homotetramer.

The catalysed reaction is UTP + L-glutamine + ATP + H2O = CTP + L-glutamate + ADP + phosphate + 2 H(+). The enzyme catalyses L-glutamine + H2O = L-glutamate + NH4(+). It carries out the reaction UTP + NH4(+) + ATP = CTP + ADP + phosphate + 2 H(+). The protein operates within pyrimidine metabolism; CTP biosynthesis via de novo pathway; CTP from UDP: step 2/2. With respect to regulation, allosterically activated by GTP, when glutamine is the substrate; GTP has no effect on the reaction when ammonia is the substrate. The allosteric effector GTP functions by stabilizing the protein conformation that binds the tetrahedral intermediate(s) formed during glutamine hydrolysis. Inhibited by the product CTP, via allosteric rather than competitive inhibition. Functionally, catalyzes the ATP-dependent amination of UTP to CTP with either L-glutamine or ammonia as the source of nitrogen. Regulates intracellular CTP levels through interactions with the four ribonucleotide triphosphates. The sequence is that of CTP synthase from Nitrosomonas europaea (strain ATCC 19718 / CIP 103999 / KCTC 2705 / NBRC 14298).